We begin with the raw amino-acid sequence, 116 residues long: uncharacterized protein (116 aa).

This is an uncharacterized protein from Bacillus subtilis (strain 168).